Consider the following 354-residue polypeptide: DNA integrity scanning protein DisA (354 aa).

Residues 6–144 (EKELKSILKL…GHIKYVLRDS (139 aa)) enclose the DAC domain. Residues G73, L91, and 104–108 (TRHRT) contribute to the ATP site.

This sequence belongs to the DisA family. In terms of assembly, homooctamer. Requires Mg(2+) as cofactor.

It catalyses the reaction 2 ATP = 3',3'-c-di-AMP + 2 diphosphate. Functionally, participates in a DNA-damage check-point that is active prior to asymmetric division when DNA is damaged. DisA forms globular foci that rapidly scan along the chromosomes during sporulation, searching for lesions. When a lesion is present, DisA pauses at the lesion site. This triggers a cellular response that culminates in a temporary block in sporulation initiation. Also has diadenylate cyclase activity, catalyzing the condensation of 2 ATP molecules into cyclic di-AMP (c-di-AMP). c-di-AMP acts as a signaling molecule that couples DNA integrity with progression of sporulation. The rise in c-di-AMP level generated by DisA while scanning the chromosome, operates as a positive signal that advances sporulation; upon encountering a lesion, the DisA focus arrests at the damaged site and halts c-di-AMP synthesis. This is DNA integrity scanning protein DisA from Clostridium kluyveri (strain ATCC 8527 / DSM 555 / NBRC 12016 / NCIMB 10680 / K1).